Consider the following 1270-residue polypeptide: Breakpoint cluster region protein (1270 aa).

Residues 28–55 are a coiled coil; sequence VGDIEQELERCKASIRRLEQEVNQERFR. Disordered regions lie at residues 67–173, 201–249, 295–396, and 412–484; these read KKSY…SADA, ISSL…DYED, KSPL…RHRQ, and TGQI…LEPT. Low complexity predominate over residues 126–139; the sequence is GRPATARRPAAAAP. 2 positions are modified to phosphoserine: S216 and S237. Phosphotyrosine is present on Y247. Low complexity-rich tracts occupy residues 348–358 and 371–384; these read SSGQSSRVSPS and SPSQ…DSSS. 3 positions are modified to phosphoserine: S358, S379, and S384. Phosphothreonine is present on T387. A phosphoserine mark is found at S461 and S465. R473 carries the omega-N-methylarginine modification. Phosphoserine occurs at positions 475 and 487. In terms of domain architecture, DH spans 497–690; that stretch reads MRKWVLSGIL…QNFLSSINEE (194 aa). Y553 carries the phosphotyrosine modification. A Phosphothreonine modification is found at T640. Phosphotyrosine is present on Y643. T692 bears the Phosphothreonine mark. The region spanning 707-865 is the PH domain; that stretch reads QLLKDSFMVE…WRESIREQQK (159 aa). The C2 domain occupies 892–1019; sequence HHIPLTINKE…QDRDWQRTVI (128 aa). The region spanning 1053-1247 is the Rho-GAP domain; sequence VKIAVVTKRE…VMSQVQVLLY (195 aa). Phosphoserine is present on S1263.

Homotetramer. Interacts with PDZK1. May interact with CCPG1. Interacts with HCK, FES/FPS, ABL1, PIK3R1 and GRB2. Interacts with SH2D5. Interacts with DLG4. Post-translationally, autophosphorylated. Phosphorylated by FES/FPS on tyrosine residues, leading to down-regulation of the BCR kinase activity. Phosphorylation by HCK is important for interaction with GRB2. Expressed in brain, including the cortex, hippocampus, cerebellum, and brainstem, as well as the spinal cord (at protein level).

It localises to the postsynaptic density. Its subcellular location is the cell projection. The protein resides in the dendritic spine. The protein localises to the axon. It is found in the synapse. It catalyses the reaction L-seryl-[protein] + ATP = O-phospho-L-seryl-[protein] + ADP + H(+). The catalysed reaction is L-threonyl-[protein] + ATP = O-phospho-L-threonyl-[protein] + ADP + H(+). In terms of biological role, protein with a unique structure having two opposing regulatory activities toward small GTP-binding proteins. The C-terminus is a GTPase-activating protein (GAP) domain which stimulates GTP hydrolysis by RAC1, RAC2 and CDC42. Accelerates the intrinsic rate of GTP hydrolysis of RAC1 or CDC42, leading to down-regulation of the active GTP-bound form. The central Dbl homology (DH) domain functions as guanine nucleotide exchange factor (GEF) that modulates the GTPases CDC42, RHOA and RAC1. Promotes the conversion of CDC42, RHOA and RAC1 from the GDP-bound to the GTP-bound form. The amino terminus contains an intrinsic kinase activity. Functions as an important negative regulator of neuronal RAC1 activity. Regulates macrophage functions such as CSF1-directed motility and phagocytosis through the modulation of RAC1 activity. Plays a major role as a RHOA GEF in keratinocytes being involved in focal adhesion formation and keratinocyte differentiation. The chain is Breakpoint cluster region protein from Rattus norvegicus (Rat).